A 483-amino-acid chain; its full sequence is Altronate oxidoreductase (483 aa).

18-29 (IIQFGEGNFLRA) contributes to the NAD(+) binding site.

Belongs to the mannitol dehydrogenase family. UxaB subfamily.

The enzyme catalyses D-altronate + NAD(+) = keto-D-tagaturonate + NADH + H(+). Its pathway is carbohydrate metabolism; pentose and glucuronate interconversion. The sequence is that of Altronate oxidoreductase from Enterobacter sp. (strain 638).